Reading from the N-terminus, the 1333-residue chain is MSYANYRYMKARAKRWRPENLDGIQTSDEHLINLFAKILSKHVPEIGKFDPNKDVESYISKLDQHFTEYPSLFPNEHTKRQYTLNHLEELEQQFAERMFSENGSLTWQELLRQTGKVQGSNKGDRLTKTFEGFRNQLDKVQFIRKLMSKANVDDFHTRLFILWMLPYSLRKLKERNYWKSEISEIYDFLEDKRTASYGKTHKRFQPQNKNLGKESLSKKNNTTNSRNLRKTNVSRIEYSSNKFLNHTRKRYEMVLQAELPDFKCSIPCLIDTGAQANIITEETVRAHKLPTRPWSKSVIYGGVYPNKINRKTIKLNISLNGISIKTEFLVVKKFSHPAAISFTTLYDNNIEISSSKHTLSQMNKVSNIVKEPELPDIYKEFKDITAETNTEKLPKPIKGLEFEVELTQENYRLPIRNYPLPPGKMQAMNDEINQGLKSGIIRESKAINACPVMFVPKKEGTLRMVVDYKPLNKYVKPNIYPLPLIEQLLAKIQGSTIFTKLDLKSAYHLIRVRKGDEHKLAFRCPRGVFEYLVMPYGISTAPAHFQYFINTILGEAKESHVVCYMDDILIHSKSESEHVKHVKDVLQKLKNANLIINQAKCEFHQSQVKFIGYHISEKGFTPCQENIDKVLQWKQPKNRKELRQFLGSVNYLRKFIPKTSQLTHPLNNLLKKDVRWKWTPTQTQAIENIKQCLVSPPVLRHFDFSKKILLETDASDVAVGAVLSQKHDDDKYYPVGYYSAKMSKAQLNYSVSDKEMLAIIKSLKHWRHYLESTIEPFKILTDHRNLIGRITNESEPENKRLARWQLFLQDFNFEINYRPGSANHIADALSRIVDETEPIPKDSEDNSINFVNQISITDDFKNQVVTEYTNDTKLLNLLNNEDKRVEENIQLKDGLLINSKDQILLPNDTQLTRTIIKKYHEEGKLIHPGIELLTNIILRRFTWKGIRKQIQEYVQNCHTCQINKSRNHKPYGPLQPIPPSERPWESLSMDFITALPESSGYNALFVVVDRFSKMAILVPCTKSITAEQTARMFDQRVIAYFGNPKEIIADNDHIFTSQTWKDFAHKYNFVMKFSLPYRPQTDGQTERTNQTVEKLLRCVCSTHPNTWVDHISLVQQSYNNAIHSATQMTPFEIVHRYSPALSPLELPSFSDKTDENSQETIQVFQTVKEHLNTNNIKMKKYFDMKIQEIEEFQPGDLVMVKRTKTGFLHKSNKLAPSFAGPFYVLQKSGPNNYELDLPDSIKHMFSSTFHVSHLEKYRHNSELNYATIDESDIGTILHILEHKNREQVLYLNVKYISNLNPSTIMSGWTTLATALQADKAIVNDYIKNNNLNI.

The segment at 199 to 231 (KTHKRFQPQNKNLGKESLSKKNNTTNSRNLRKT) is disordered. Residues 218-231 (KKNNTTNSRNLRKT) are compositionally biased toward polar residues. A Peptidase A2 domain is found at 266–342 (IPCLIDTGAQ…KFSHPAAISF (77 aa)). Asp271 acts as the For protease activity in catalysis. In terms of domain architecture, Reverse transcriptase spans 436–615 (LKSGIIRESK…SQVKFIGYHI (180 aa)). Positions 502, 566, 567, 990, and 1050 each coordinate Mg(2+). Residues 979 to 1138 (PSERPWESLS…TPFEIVHRYS (160 aa)) form the Integrase catalytic domain.

In terms of processing, processing of the polyproteins proceeds by an ordered pathway, called maturation. It involves the initial cleavage of a 27 kDa capsid protein (CA) from the N-terminus of the polyprotein, followed by the cleavage of a 56 kDa integrase (IN) from the C-terminus. This leaves a 72 kDa protease-reverse transcriptase fusion protein (PR-RT), which does not seem to be processed further.

The sequence is that of Transposon Tf2-12 polyprotein (Tf2-12) from Schizosaccharomyces pombe (strain 972 / ATCC 24843) (Fission yeast).